Consider the following 1059-residue polypeptide: Disks large-associated protein 2 (1059 aa).

2 disordered regions span residues 31 to 54 (GEPE…PAEE) and 245 to 311 (KSHS…SDST). Residues 245–261 (KSHSLEGSSKSNINGTK) show a composition bias toward polar residues. A compositionally biased stretch (basic and acidic residues) spans 262 to 271 (SDSRVDDHHQ). Positions 272–285 (SHLSKHSKRSKSKE) are enriched in basic residues. Residues serine 302, serine 308, serine 390, and serine 456 each carry the phosphoserine modification. A disordered region spans residues 613-669 (YKKTPPPVPPRTTSKPLISVTAQSSTESTQDAYQDSRAQRMSPWPQDSRGGLYNSMD). Positions 632-645 (VTAQSSTESTQDAY) are enriched in polar residues. Phosphoserine is present on residues serine 667, serine 670, serine 673, and serine 720. Residues 723–756 (VQDSEFPDHQPYPRSDVETATDSDTESRGLREYH) are disordered. Threonine 743 carries the phosphothreonine modification. Phosphoserine is present on serine 745. A compositionally biased stretch (basic and acidic residues) spans 747–756 (TESRGLREYH). Phosphoserine is present on residues serine 776, serine 811, serine 983, and serine 1012. The segment at 985–1025 (ERKEERKIPPPIPKKPPKGKFPITREKSLDLPDRQRQEARR) is disordered. A compositionally biased stretch (basic and acidic residues) spans 1007 to 1025 (ITREKSLDLPDRQRQEARR).

This sequence belongs to the SAPAP family. Interacts with DLG4/PSD-95. As to expression, expressed in various brain areas.

It localises to the cell membrane. The protein resides in the postsynaptic density. Its subcellular location is the synapse. Its function is as follows. May play a role in the molecular organization of synapses and neuronal cell signaling. Could be an adapter protein linking ion channel to the subsynaptic cytoskeleton. May induce enrichment of PSD-95/SAP90 at the plasma membrane. The protein is Disks large-associated protein 2 of Mus musculus (Mouse).